Here is an 868-residue protein sequence, read N- to C-terminus: DNA topoisomerase 1 (868 aa).

A Toprim domain is found at 3 to 148 (KSLVIVESPA…RFSRVVFNEI (146 aa)). Positions 9 and 117 each coordinate Mg(2+). A Topo IA-type catalytic domain is found at 164–581 (NLDRVNAQQT…QFFKDFSQQL (418 aa)). The interaction with DNA stretch occupies residues 198–203 (SAGRVQ). Residue tyrosine 325 is the O-(5'-phospho-DNA)-tyrosine intermediate of the active site. 3 consecutive C4-type zinc fingers follow at residues 605 to 636 (CPTCGRKMAIRTASTGVFLGCSGYALPPKERC), 667 to 694 (CPKCGTAMDSYLIDPERKIHICGHNPNC), and 716 to 739 (CDKCGADMHLKLGRFGKYMGCTSC).

It belongs to the type IA topoisomerase family. As to quaternary structure, monomer. The cofactor is Mg(2+).

It catalyses the reaction ATP-independent breakage of single-stranded DNA, followed by passage and rejoining.. In terms of biological role, releases the supercoiling and torsional tension of DNA, which is introduced during the DNA replication and transcription, by transiently cleaving and rejoining one strand of the DNA duplex. Introduces a single-strand break via transesterification at a target site in duplex DNA. The scissile phosphodiester is attacked by the catalytic tyrosine of the enzyme, resulting in the formation of a DNA-(5'-phosphotyrosyl)-enzyme intermediate and the expulsion of a 3'-OH DNA strand. The free DNA strand then undergoes passage around the unbroken strand, thus removing DNA supercoils. Finally, in the religation step, the DNA 3'-OH attacks the covalent intermediate to expel the active-site tyrosine and restore the DNA phosphodiester backbone. This chain is DNA topoisomerase 1, found in Pasteurella multocida (strain Pm70).